The following is a 327-amino-acid chain: Zinc transport protein ZntB (327 aa).

The Cytoplasmic portion of the chain corresponds to Met1–Met273. A helical membrane pass occupies residues Ala274–Ile294. Residues Pro295–Gln300 are Periplasmic-facing. The chain crosses the membrane as a helical span at residues Phe301 to Leu321. The Cytoplasmic portion of the chain corresponds to Tyr322–Leu327.

Belongs to the CorA metal ion transporter (MIT) (TC 1.A.35) family.

Its subcellular location is the cell inner membrane. It carries out the reaction Zn(2+)(out) + H(+)(out) = Zn(2+)(in) + H(+)(in). Functionally, zinc transporter. Acts as a Zn(2+):proton symporter, which likely mediates zinc ion uptake. This chain is Zinc transport protein ZntB, found in Shigella flexneri serotype 5b (strain 8401).